Consider the following 371-residue polypeptide: Deoxyhypusine synthase (371 aa).

NAD(+)-binding positions include 112–116 (SNLVT), 138–140 (SAG), Glu-144, and Asp-245. Residue 143 to 144 (EE) coordinates spermidine. Residue Asp-250 coordinates spermidine. Gly-291 is an NAD(+) binding site. Residue His-296 coordinates spermidine. 316–317 (TG) lines the NAD(+) pocket. Residues 322 to 324 (GSD) and 331 to 337 (EAVSWGK) contribute to the spermidine site. Lys-337 acts as the Nucleophile in catalysis. Residue 350–351 (EA) coordinates NAD(+).

The protein belongs to the deoxyhypusine synthase family. The cofactor is NAD(+).

The enzyme catalyses [eIF5A protein]-L-lysine + spermidine = [eIF5A protein]-deoxyhypusine + propane-1,3-diamine. Its pathway is protein modification; eIF5A hypusination. Functionally, catalyzes the NAD-dependent oxidative cleavage of spermidine and the subsequent transfer of the butylamine moiety of spermidine to the epsilon-amino group of a critical lysine residue of the eIF-5A precursor protein to form the intermediate deoxyhypusine residue. This is the first step of the post-translational modification of that lysine into an unusual amino acid residue named hypusine. Hypusination is unique to mature eIF-5A factor and is essential for its function. The protein is Deoxyhypusine synthase of Caenorhabditis elegans.